Consider the following 128-residue polypeptide: UPF0102 protein GSU0650 (128 aa).

The protein belongs to the UPF0102 family.

This is UPF0102 protein GSU0650 from Geobacter sulfurreducens (strain ATCC 51573 / DSM 12127 / PCA).